An 874-amino-acid chain; its full sequence is MKAAEIREKFLKFFESKGHTIVRSSSLVPGNDPTLMFTNSGMVQFKDVFLGTDQRPYTRATTAQRSVRAGGKHNDLENVGYTARHHTFFEMLGNFSFGDYFKHDAIRFAWELLTTVYQLPKDKLWVTVYQEDDEAYDIWAKEVGVPAERIIRIGDNKGARYASDNFWTMGDTGPCGPCTEIFYDHGPDVWGGPPGSPEEDGDRYIEIWNLVFMQFNRDAQGNMTRLPKQSVDTGMGLERLAAVLQHVHSNYEIDLFQNLIKAAARVTETADLNNNSLKVIADHIRACSFLIVDGVIPGNEGRGYVLRRIVRRAIRHGYKLGRKGAFFHKLVADLVAEMGAAYPELKEAEQRVTDVLRQEEERFFETIEHGMSILEAALADVEAKGGKVLDGELAFKLHDTYGFPLDLTADVCRERGMTVDEPAFDDAMARQREQARAAGKFKATQGLEYTGAKTTFHGYEEIAFDDAKVVALYVEGSSVGEVKAGQDAVVVLDHTPFYAESGGQVGDQGVLANAATRFAVADTLKVQADVIGHHGTLEQGTLKVGDVLRAEIDAQRRARTQRNHSATHLMHKALREVLGAHVQQKGSLVDADKTRFDFAHNAPLTDDEIRRVEQIVNDEILANAPGIVRVMPYDEAVKGGAMALFGEKYGDEVRVLDLGFSRELCGGTHVQRTGDIGLFKIVVEGGVAAGIRRVEAITGDNAVRYVQELDARVNEAAAALKAQPSELTQRIAQVQEQVKSLEKELGALKSKLASSQGDELAQQAVEVGGVFVLAATLDGADAKTLRETVDKLKYKLKSAAIVLAAVEGGKVSLIAGVTPEASKKVKAGELVNFVAQQVGGKGGGRPDMAQAGGTEPANLPGALAGVKGWIEARL.

Positions 564, 568, 665, and 669 each coordinate Zn(2+).

This sequence belongs to the class-II aminoacyl-tRNA synthetase family. Zn(2+) serves as cofactor.

The protein localises to the cytoplasm. The enzyme catalyses tRNA(Ala) + L-alanine + ATP = L-alanyl-tRNA(Ala) + AMP + diphosphate. Catalyzes the attachment of alanine to tRNA(Ala) in a two-step reaction: alanine is first activated by ATP to form Ala-AMP and then transferred to the acceptor end of tRNA(Ala). Also edits incorrectly charged Ser-tRNA(Ala) and Gly-tRNA(Ala) via its editing domain. This is Alanine--tRNA ligase from Burkholderia vietnamiensis (strain G4 / LMG 22486) (Burkholderia cepacia (strain R1808)).